The sequence spans 177 residues: Large ribosomal subunit protein uL6 (177 aa).

This sequence belongs to the universal ribosomal protein uL6 family. As to quaternary structure, part of the 50S ribosomal subunit.

This protein binds to the 23S rRNA, and is important in its secondary structure. It is located near the subunit interface in the base of the L7/L12 stalk, and near the tRNA binding site of the peptidyltransferase center. This is Large ribosomal subunit protein uL6 from Latilactobacillus sakei subsp. sakei (strain 23K) (Lactobacillus sakei subsp. sakei).